We begin with the raw amino-acid sequence, 339 residues long: Glycerol-3-phosphate dehydrogenase [NAD(P)+] (339 aa).

Positions 15, 16, 36, and 110 each coordinate NADPH. Sn-glycerol 3-phosphate is bound by residues Lys110, Gly139, and Thr141. Ala143 serves as a coordination point for NADPH. Positions 195, 248, 258, 259, and 260 each coordinate sn-glycerol 3-phosphate. Lys195 serves as the catalytic Proton acceptor. Residue Arg259 participates in NADPH binding. Residues Val283 and Glu285 each coordinate NADPH.

The protein belongs to the NAD-dependent glycerol-3-phosphate dehydrogenase family.

The protein resides in the cytoplasm. The catalysed reaction is sn-glycerol 3-phosphate + NAD(+) = dihydroxyacetone phosphate + NADH + H(+). It catalyses the reaction sn-glycerol 3-phosphate + NADP(+) = dihydroxyacetone phosphate + NADPH + H(+). It participates in membrane lipid metabolism; glycerophospholipid metabolism. Functionally, catalyzes the reduction of the glycolytic intermediate dihydroxyacetone phosphate (DHAP) to sn-glycerol 3-phosphate (G3P), the key precursor for phospholipid synthesis. The polypeptide is Glycerol-3-phosphate dehydrogenase [NAD(P)+] (Enterobacter sp. (strain 638)).